The primary structure comprises 687 residues: DNA ligase (687 aa).

Residues 34–38 (DAEYD), 83–84 (SL), and glutamate 117 each bind NAD(+). Residue lysine 119 is the N6-AMP-lysine intermediate of the active site. The NAD(+) site is built by arginine 140, glutamate 182, lysine 298, and lysine 322. Residues cysteine 416, cysteine 419, cysteine 434, and cysteine 439 each contribute to the Zn(2+) site. The region spanning 609–687 (EARGPFAGKT…EEEFVRLLKE (79 aa)) is the BRCT domain.

It belongs to the NAD-dependent DNA ligase family. LigA subfamily. The cofactor is Mg(2+). Requires Mn(2+) as cofactor.

The enzyme catalyses NAD(+) + (deoxyribonucleotide)n-3'-hydroxyl + 5'-phospho-(deoxyribonucleotide)m = (deoxyribonucleotide)n+m + AMP + beta-nicotinamide D-nucleotide.. Its function is as follows. DNA ligase that catalyzes the formation of phosphodiester linkages between 5'-phosphoryl and 3'-hydroxyl groups in double-stranded DNA using NAD as a coenzyme and as the energy source for the reaction. It is essential for DNA replication and repair of damaged DNA. The chain is DNA ligase from Anaeromyxobacter dehalogenans (strain 2CP-1 / ATCC BAA-258).